The chain runs to 1064 residues: Fibropellin-1 (1064 aa).

Residues 1–19 (MRTWLLAVLLLSVIAVTYG) form the signal peptide. An EGF-like 1 domain is found at 20 to 55 (QGECDSDPCENGSTCQEGEGSYICQCPMGYDGQNCD). Cystine bridges form between Cys-23–Cys-34, Cys-28–Cys-43, Cys-45–Cys-54, and Cys-62–Cys-88. Asn-30 is a glycosylation site (N-linked (GlcNAc...) asparagine). The 114-residue stretch at 62–175 (CGYNVFDANG…NRGFRITFSS (114 aa)) folds into the CUB domain. Asn-136 carries an N-linked (GlcNAc...) asparagine glycan. An EGF-like 2; calcium-binding domain is found at 176-212 (DGDDCDPNLCQNGAACTDLVNDYACTCPPGFTGRNCE). 61 cysteine pairs are disulfide-bonded: Cys-180–Cys-191, Cys-185–Cys-200, Cys-202–Cys-211, Cys-218–Cys-229, Cys-223–Cys-238, Cys-240–Cys-249, Cys-256–Cys-267, Cys-261–Cys-276, Cys-278–Cys-287, Cys-294–Cys-305, Cys-299–Cys-314, Cys-316–Cys-325, Cys-332–Cys-343, Cys-337–Cys-352, Cys-354–Cys-363, Cys-370–Cys-381, Cys-375–Cys-390, Cys-392–Cys-401, Cys-408–Cys-419, Cys-413–Cys-428, Cys-430–Cys-439, Cys-446–Cys-457, Cys-451–Cys-466, Cys-468–Cys-477, Cys-484–Cys-495, Cys-489–Cys-504, Cys-506–Cys-515, Cys-522–Cys-533, Cys-527–Cys-542, Cys-544–Cys-553, Cys-560–Cys-571, Cys-565–Cys-580, Cys-582–Cys-591, Cys-598–Cys-609, Cys-603–Cys-618, Cys-620–Cys-629, Cys-636–Cys-647, Cys-641–Cys-656, Cys-658–Cys-667, Cys-674–Cys-685, Cys-679–Cys-694, Cys-696–Cys-705, Cys-712–Cys-723, Cys-717–Cys-732, Cys-734–Cys-743, Cys-750–Cys-761, Cys-755–Cys-770, Cys-772–Cys-781, Cys-788–Cys-799, Cys-793–Cys-808, Cys-810–Cys-819, Cys-826–Cys-837, Cys-831–Cys-846, Cys-848–Cys-857, Cys-864–Cys-875, Cys-869–Cys-884, Cys-886–Cys-895, Cys-902–Cys-913, Cys-907–Cys-922, Cys-924–Cys-933, and Cys-939–Cys-1015. The 37-residue stretch at 214-250 (DIDECASDPCQNGGACVDGVNGYVCNCVPGFDGDECE) folds into the EGF-like 3; calcium-binding domain. An EGF-like 4; calcium-binding domain is found at 252–288 (NINECASSPCLNGGICVDGVNMFECTCLAGFTGVRCE). Residues 290–326 (NIDECASAPCQNGGICIDGINGYTCSCPLGFSGDNCE) form the EGF-like 5; calcium-binding domain. One can recognise an EGF-like 6; calcium-binding domain in the interval 328–364 (NDDECSSIPCLNGGTCVDLVNAYMCVCAPGWTGPTCA). The EGF-like 7; calcium-binding domain maps to 366 to 402 (NIDECASAPCQNGGVCIDGVNGYMCDCQPGYTGTHCE). One can recognise an EGF-like 8; calcium-binding domain in the interval 404–440 (DIDECARPPCQNGGDCVDGVNGYVCICAPGFDGLNCE). Residues 442-478 (NIDECASRPCQNGAVCVDGVNGFVCTCSAGYTGVLCE) enclose the EGF-like 9; calcium-binding domain. The 37-residue stretch at 480-516 (DINECASMPCLNGGVCTDLVNGYICTCAAGFEGTNCE) folds into the EGF-like 10; calcium-binding domain. In terms of domain architecture, EGF-like 11; calcium-binding spans 518 to 554 (DTDECASFPCQNGATCTDQVNGYVCTCVPGYTGVLCE). The EGF-like 12; calcium-binding domain maps to 556-592 (DINECASFPCLNGGTCNDQVNGYVCVCAQDTSVSTCE). Residues 594-630 (DRDECASAPCLNGGACMDVVNGFVCTCLPGWEGTNCE) form the EGF-like 13; calcium-binding domain. One can recognise an EGF-like 14; calcium-binding domain in the interval 632 to 668 (NTDECASSPCMNGGLCVDQVNSYVCFCLPGFTGIHCG). Positions 670 to 706 (EIDECASSPCLNGGQCIDRVDSYECVCAAGYTAVRCQ) constitute an EGF-like 15; calcium-binding domain. The 37-residue stretch at 708–744 (NIDECASAPCQNGGVCVDGVNGYVCNCAPGYTGDNCE) folds into the EGF-like 16; calcium-binding domain. Residues 746–782 (EIDECASMPCLNGGACIEMVNGYTCQCVAGYTGVICE) enclose the EGF-like 17; calcium-binding domain. Residues 784–820 (DIDECASAPCQNGGVCTDTINGYICACVPGFTGSNCE) enclose the EGF-like 18; calcium-binding domain. Positions 822–858 (NIDECASDPCLNGGICVDGVNGFVCQCPPNYSGTYCE) constitute an EGF-like 19; calcium-binding domain. The N-linked (GlcNAc...) asparagine glycan is linked to Asn-851. The EGF-like 20 domain occupies 860 to 896 (SLDACRSMPCQNGATCVNVGADYVCECVPGYAGQNCE). The region spanning 898–934 (DINECASLPCQNGGLCIDGIAGYTCQCRLGYIGVNCE) is the EGF-like 21; calcium-binding domain. The 120-residue stretch at 937-1056 (GFCDLEGMWY…GQDKWTRYEQ (120 aa)) folds into the Avidin-like domain.

Homotetramer.

It localises to the secreted. It is found in the extracellular space. The protein localises to the cytoplasmic vesicle. The protein resides in the extracellular matrix. Its subcellular location is the hyaline layer. It localises to the apical lamina. Functionally, forms the apical lamina, a component of the extracellular matrix. The protein is Fibropellin-1 (EGF1) of Strongylocentrotus purpuratus (Purple sea urchin).